The sequence spans 2190 residues: Non-reducing polyketide synthase mapC' (2190 aa).

Residues 14 to 268 (VLFGPQCPDI…HHEAHREGIQ (255 aa)) are N-terminal acylcarrier protein transacylase domain (SAT). Residues 401-817 (ASPIAITGMA…GSNAALIVKE (417 aa)) form the Ketosynthase family 3 (KS3) domain. Residues Cys-566, His-701, and His-740 each act as for beta-ketoacyl synthase activity in the active site. Residues 893–1190 (CFGGQNGLTA…NVTSALWAQG (298 aa)) are malonyl-CoA:ACP transacylase (MAT) domain. Ser-979 serves as the catalytic For acyl/malonyl transferase activity. The segment at 1243-1375 (GQEAGLLCQL…GTVCLHQERS (133 aa)) is N-terminal hotdog fold. Positions 1243 to 1552 (GQEAGLLCQL…FTSVSIRSLT (310 aa)) constitute a PKS/mFAS DH domain. Positions 1251-1556 (QLSESPDERL…SIRSLTRALA (306 aa)) are product template (PT) domain. His-1277 functions as the Proton acceptor; for dehydratase activity in the catalytic mechanism. The tract at residues 1401–1552 (ASNGLKGSTV…FTSVSIRSLT (152 aa)) is C-terminal hotdog fold. Asp-1458 serves as the catalytic Proton donor; for dehydratase activity. Residues 1597-1671 (ANDLATVQEM…GLVEHIFPGH (75 aa)) form the Carrier domain. Residue Ser-1631 is modified to O-(pantetheine 4'-phosphoryl)serine. A methyltransferase (CMeT) domain region spans residues 1840-2187 (ATMSPSKPIK…AEGYEFLRTH (348 aa)). Catalysis depends on for thioesterase activity residues Ser-1969, Asp-2127, and His-2159.

The protein localises to the cytoplasm. It is found in the cytosol. It carries out the reaction 3 malonyl-CoA + acetyl-CoA + S-adenosyl-L-methionine + H(+) = 5-methylorsellinate + S-adenosyl-L-homocysteine + 3 CO2 + 4 CoA. The protein operates within secondary metabolite biosynthesis; terpenoid biosynthesis. In terms of biological role, non-reducing polyketide synthase; part of the gene cluster that mediates the biosynthesis of mycophenolic acid (MPA), the first isolated antibiotic natural product in the world obtained from a culture of Penicillium brevicompactum in 1893. MpaC' catalyzes the synthesis of 5-methylorsellinic acid (5MOA) via the condensation of 1 acetyl-CoA starter unit with 3 malonyl-CoA units and one methylation step. The first step of the pathway is the synthesis of 5-methylorsellinic acid (5MOA) by the cytosolic polyketide synthase mpaC. 5MOA is then converted to the phthalide compound 5,7-dihydroxy-4,6-dimethylphthalide (DHMP) by the endoplasmic reticulum-bound cytochrome P450 monooxygenase mpaDE. MpaDE first catalyzes hydroxylation of 5-MOA to 4,6-dihydroxy-2-(hydroxymethyl)-3-methylbenzoic acid (DHMB). MpaDE then acts as a lactone synthase that catalyzes the ring closure to convert DHMB into DHMP. The next step is the prenylation of DHMP by the Golgi apparatus-associated prenyltransferase mpaA to yield farnesyl-DHMP (FDHMP). The ER-bound oxygenase mpaB then mediates the oxidative cleavage the C19-C20 double bond in FDHMP to yield FDHMP-3C via a mycophenolic aldehyde intermediate. The O-methyltransferase mpaG catalyzes the methylation of FDHMP-3C to yield MFDHMP-3C. After the cytosolic methylation of FDHMP-3C, MFDHMP-3C enters into peroxisomes probably via free diffusion due to its low molecular weight. Upon a peroxisomal CoA ligation reaction, catalyzed by a beta-oxidation component enzyme acyl-CoA ligase ACL891, MFDHMP-3C-CoA would then be restricted to peroxisomes for the following beta-oxidation pathway steps. The peroxisomal beta-oxidation machinery than converts MFDHMP-3C-CoA into MPA_CoA, via a beta-oxidation chain-shortening process. Finally mpaH acts as a peroxisomal acyl-CoA hydrolase with high substrate specificity toward MPA-CoA to release the final product MPA. This chain is Non-reducing polyketide synthase mapC', found in Penicillium brevicompactum.